The sequence spans 74 residues: ATP synthase subunit c (74 aa).

2 helical membrane passes run 5 to 25 and 49 to 69; these read LAHIGAGLAAIGSGAAAIGVG and LFIGIAFAEALGIFAFLVALL.

Belongs to the ATPase C chain family. In terms of assembly, F-type ATPases have 2 components, F(1) - the catalytic core - and F(0) - the membrane proton channel. F(1) has five subunits: alpha(3), beta(3), gamma(1), delta(1), epsilon(1). F(0) has four main subunits: a(1), b(1), b'(1) and c(10-14). The alpha and beta chains form an alternating ring which encloses part of the gamma chain. F(1) is attached to F(0) by a central stalk formed by the gamma and epsilon chains, while a peripheral stalk is formed by the delta, b and b' chains.

It is found in the cell inner membrane. F(1)F(0) ATP synthase produces ATP from ADP in the presence of a proton or sodium gradient. F-type ATPases consist of two structural domains, F(1) containing the extramembraneous catalytic core and F(0) containing the membrane proton channel, linked together by a central stalk and a peripheral stalk. During catalysis, ATP synthesis in the catalytic domain of F(1) is coupled via a rotary mechanism of the central stalk subunits to proton translocation. In terms of biological role, key component of the F(0) channel; it plays a direct role in translocation across the membrane. A homomeric c-ring of between 10-14 subunits forms the central stalk rotor element with the F(1) delta and epsilon subunits. This chain is ATP synthase subunit c, found in Roseobacter denitrificans (strain ATCC 33942 / OCh 114) (Erythrobacter sp. (strain OCh 114)).